The chain runs to 439 residues: tRNA-2-methylthio-N(6)-dimethylallyladenosine synthase (439 aa).

The MTTase N-terminal domain maps to 2–116 (LKVYIETMGC…ISQVIHKEKA (115 aa)). Positions 11, 47, 79, 149, 153, and 156 each coordinate [4Fe-4S] cluster. Residues 135–368 (KKAEVRSLLN…QNRHKEILEE (234 aa)) enclose the Radical SAM core domain. The 67-residue stretch at 371-437 (RLEVGKTHVV…KGRLMATTKN (67 aa)) folds into the TRAM domain.

Belongs to the methylthiotransferase family. MiaB subfamily. In terms of assembly, monomer. Requires [4Fe-4S] cluster as cofactor.

The protein localises to the cytoplasm. It catalyses the reaction N(6)-dimethylallyladenosine(37) in tRNA + (sulfur carrier)-SH + AH2 + 2 S-adenosyl-L-methionine = 2-methylsulfanyl-N(6)-dimethylallyladenosine(37) in tRNA + (sulfur carrier)-H + 5'-deoxyadenosine + L-methionine + A + S-adenosyl-L-homocysteine + 2 H(+). Functionally, catalyzes the methylthiolation of N6-(dimethylallyl)adenosine (i(6)A), leading to the formation of 2-methylthio-N6-(dimethylallyl)adenosine (ms(2)i(6)A) at position 37 in tRNAs that read codons beginning with uridine. In Helicobacter acinonychis (strain Sheeba), this protein is tRNA-2-methylthio-N(6)-dimethylallyladenosine synthase.